A 32-amino-acid chain; its full sequence is Photosystem II reaction center protein T (32 aa).

Residues 3–23 (ALVYTFLLIGTLIVIFFAVFF) form a helical membrane-spanning segment.

This sequence belongs to the PsbT family. PSII is composed of 1 copy each of membrane proteins PsbA, PsbB, PsbC, PsbD, PsbE, PsbF, PsbH, PsbI, PsbJ, PsbK, PsbL, PsbM, PsbT, PsbX, PsbY, PsbZ, Psb30/Ycf12, at least 3 peripheral proteins of the oxygen-evolving complex and a large number of cofactors. It forms dimeric complexes.

The protein localises to the plastid. It localises to the chloroplast thylakoid membrane. Its function is as follows. Found at the monomer-monomer interface of the photosystem II (PS II) dimer, plays a role in assembly and dimerization of PSII. PSII is a light-driven water plastoquinone oxidoreductase, using light energy to abstract electrons from H(2)O, generating a proton gradient subsequently used for ATP formation. The chain is Photosystem II reaction center protein T from Phaeodactylum tricornutum (strain CCAP 1055/1).